A 263-amino-acid polypeptide reads, in one-letter code: Kallikrein 1-related peptidase b27 (263 aa).

The signal sequence occupies residues Met1–Ala17. A propeptide spans Ala18–Arg24 (activation peptide). Residues Ile25–Ala260 enclose the Peptidase S1 domain. Intrachain disulfides connect Cys31/Cys175, Cys50/Cys66, Cys154/Cys221, Cys186/Cys200, and Cys211/Cys236. His65 (charge relay system) is an active-site residue. Residues Asn69 and Asn105 are each glycosylated (N-linked (GlcNAc...) asparagine). Asp122 (charge relay system) is an active-site residue. Residue Ser215 is the Charge relay system of the active site.

It belongs to the peptidase S1 family. Kallikrein subfamily. As to expression, expressed in testis and submaxillary gland. Not expressed in heart, brain, spleen, lung, liver, muscle, kidney and ovary. In the testis, expression localized specifically to Leydig cells in the interstitial tissues.

Strongly inhibited by protease inhibitors diisopropyl fluorophosphate, phenylmethanesulfonyl fluoride and SBTI. Functionally, serine protease with chymotrypsin-like cleavage specificity. Shows activity towards casein, gelatin, IGFBP3 and fibronectin but not towards laminin or collagens I and IV. Does not hydrolyze kininogin to release Lys-bradykinin. In Mus musculus (Mouse), this protein is Kallikrein 1-related peptidase b27 (Klk1b27).